The sequence spans 571 residues: Protein EARLY STARVATION 1, chloroplastic (571 aa).

Disordered regions lie at residues 142-162 (RHSS…KDAG) and 215-254 (GSYR…TEHD). Over residues 145–155 (SCSSQSLPQQQ) the composition is skewed to low complexity.

The protein belongs to the ESV1 family.

It localises to the plastid. The protein localises to the chloroplast stroma. Its function is as follows. Binds preferentially to highly ordered alpha-glucans, such as starch and crystalline maltodextrins. Involved in the organization of the starch granule matrix, thus influencing starch turnover by modulating the accessibility of starch polymers to modifying and degrading enzymes. Required for the control of starch degradation in leaves and starch distribution in nonphotosynthetic parts. Promotes gravitropic responses, negative in shoots but positive in roots, by facilitating starch granules (statoliths) formation in hypocotyls and roots columella. This chain is Protein EARLY STARVATION 1, chloroplastic, found in Marchantia polymorpha (Common liverwort).